Reading from the N-terminus, the 166-residue chain is MASQASLLLQKQLKDLCKHPVDGFSAGLVDEKNIFEWSVTIIGPPDTLYEGGFFNAIMTFPQNYPNSPPTVRFTSDMWHPNVYSDGRVCISILHPPGDDPSGYELASERWTPVHTVESIMLSIISMLSGPNDESPANVEAAKEWRDKRDEFKKKVSRCVRKSQEMF.

Alanine 2 bears the N-acetylalanine mark. A UBC core domain is found at 4-164; it reads QASLLLQKQL…VSRCVRKSQE (161 aa). Cysteine 89 functions as the Glycyl thioester intermediate in the catalytic mechanism.

This sequence belongs to the ubiquitin-conjugating enzyme family.

The enzyme catalyses S-ubiquitinyl-[E1 ubiquitin-activating enzyme]-L-cysteine + [E2 ubiquitin-conjugating enzyme]-L-cysteine = [E1 ubiquitin-activating enzyme]-L-cysteine + S-ubiquitinyl-[E2 ubiquitin-conjugating enzyme]-L-cysteine.. Its pathway is protein modification; protein ubiquitination. Its function is as follows. Accepts the ubiquitin from the E1 complex and catalyzes its covalent attachment to other proteins. Involved in the formation of multiubiquitin chains. Signal the protein for selective degradation. The sequence is that of Ubiquitin-conjugating enzyme E2 7 (UBC7) from Arabidopsis thaliana (Mouse-ear cress).